The sequence spans 182 residues: UPF0397 protein SPH_0594 (182 aa).

Helical transmembrane passes span 10–30, 46–66, 73–93, 109–129, and 148–168; these read VVAV…NIPT, LLSI…GHAI, YGLW…VGLF, ILIF…VLAP, and IVAG…LLLA.

This sequence belongs to the UPF0397 family.

The protein resides in the cell membrane. In Streptococcus pneumoniae (strain Hungary19A-6), this protein is UPF0397 protein SPH_0594.